Consider the following 294-residue polypeptide: N-acetylmuramic acid 6-phosphate etherase (294 aa).

Positions Val-54–Lys-217 constitute an SIS domain. The active-site Proton donor is Glu-82. Residue Glu-113 is part of the active site.

It belongs to the GCKR-like family. MurNAc-6-P etherase subfamily. In terms of assembly, homodimer.

The catalysed reaction is N-acetyl-D-muramate 6-phosphate + H2O = N-acetyl-D-glucosamine 6-phosphate + (R)-lactate. It participates in amino-sugar metabolism; N-acetylmuramate degradation. In terms of biological role, specifically catalyzes the cleavage of the D-lactyl ether substituent of MurNAc 6-phosphate, producing GlcNAc 6-phosphate and D-lactate. The sequence is that of N-acetylmuramic acid 6-phosphate etherase from Bacillus anthracis (strain A0248).